Consider the following 189-residue polypeptide: Peptidyl-tRNA hydrolase (189 aa).

A tRNA-binding site is contributed by Phe-15. Residue His-20 is the Proton acceptor of the active site. The tRNA site is built by Tyr-65, Asn-67, and Asn-113.

This sequence belongs to the PTH family. In terms of assembly, monomer.

Its subcellular location is the cytoplasm. It catalyses the reaction an N-acyl-L-alpha-aminoacyl-tRNA + H2O = an N-acyl-L-amino acid + a tRNA + H(+). In terms of biological role, hydrolyzes ribosome-free peptidyl-tRNAs (with 1 or more amino acids incorporated), which drop off the ribosome during protein synthesis, or as a result of ribosome stalling. Functionally, catalyzes the release of premature peptidyl moieties from peptidyl-tRNA molecules trapped in stalled 50S ribosomal subunits, and thus maintains levels of free tRNAs and 50S ribosomes. The chain is Peptidyl-tRNA hydrolase from Phytoplasma australiense.